The following is a 292-amino-acid chain: Release factor glutamine methyltransferase (292 aa).

Residues 126-130 (GTGTG), Asp-157, Trp-184, and Asn-198 contribute to the S-adenosyl-L-methionine site. Residue 198–201 (NPPY) coordinates substrate.

Belongs to the protein N5-glutamine methyltransferase family. PrmC subfamily.

It carries out the reaction L-glutaminyl-[peptide chain release factor] + S-adenosyl-L-methionine = N(5)-methyl-L-glutaminyl-[peptide chain release factor] + S-adenosyl-L-homocysteine + H(+). Functionally, methylates the class 1 translation termination release factors RF1/PrfA and RF2/PrfB on the glutamine residue of the universally conserved GGQ motif. This Haemophilus influenzae (strain ATCC 51907 / DSM 11121 / KW20 / Rd) protein is Release factor glutamine methyltransferase.